The primary structure comprises 480 residues: Aspartyl/glutamyl-tRNA(Asn/Gln) amidotransferase subunit B (480 aa).

It belongs to the GatB/GatE family. GatB subfamily. As to quaternary structure, heterotrimer of A, B and C subunits.

The catalysed reaction is L-glutamyl-tRNA(Gln) + L-glutamine + ATP + H2O = L-glutaminyl-tRNA(Gln) + L-glutamate + ADP + phosphate + H(+). It catalyses the reaction L-aspartyl-tRNA(Asn) + L-glutamine + ATP + H2O = L-asparaginyl-tRNA(Asn) + L-glutamate + ADP + phosphate + 2 H(+). Functionally, allows the formation of correctly charged Asn-tRNA(Asn) or Gln-tRNA(Gln) through the transamidation of misacylated Asp-tRNA(Asn) or Glu-tRNA(Gln) in organisms which lack either or both of asparaginyl-tRNA or glutaminyl-tRNA synthetases. The reaction takes place in the presence of glutamine and ATP through an activated phospho-Asp-tRNA(Asn) or phospho-Glu-tRNA(Gln). The chain is Aspartyl/glutamyl-tRNA(Asn/Gln) amidotransferase subunit B from Streptococcus pneumoniae serotype 19F (strain G54).